A 176-amino-acid chain; its full sequence is Cytochrome c-552 (176 aa).

Residues 12-32 traverse the membrane as a helical; Signal-anchor segment; it reads GALIGSLLFLLLMSWAASGIF. Positions 90, 93, 94, 126, and 154 each coordinate heme c.

In terms of processing, binds 1 heme c group covalently per subunit.

The protein resides in the cell membrane. Its function is as follows. Mediates the electron transport between the cytochrome bc1 complex and cytochrome-c oxidase. This is Cytochrome c-552 (cycM) from Paracoccus denitrificans.